A 332-amino-acid polypeptide reads, in one-letter code: N-acetyl-gamma-glutamyl-phosphate reductase (332 aa).

Cysteine 144 is an active-site residue.

This sequence belongs to the NAGSA dehydrogenase family. Type 1 subfamily.

It localises to the cytoplasm. It catalyses the reaction N-acetyl-L-glutamate 5-semialdehyde + phosphate + NADP(+) = N-acetyl-L-glutamyl 5-phosphate + NADPH + H(+). It functions in the pathway amino-acid biosynthesis; L-arginine biosynthesis; N(2)-acetyl-L-ornithine from L-glutamate: step 3/4. In terms of biological role, catalyzes the NADPH-dependent reduction of N-acetyl-5-glutamyl phosphate to yield N-acetyl-L-glutamate 5-semialdehyde. This Archaeoglobus fulgidus (strain ATCC 49558 / DSM 4304 / JCM 9628 / NBRC 100126 / VC-16) protein is N-acetyl-gamma-glutamyl-phosphate reductase.